A 300-amino-acid chain; its full sequence is Homoserine kinase (300 aa).

82–92 (RPGSGLGSSAA) is a binding site for ATP.

Belongs to the GHMP kinase family. Homoserine kinase subfamily.

The protein resides in the cytoplasm. The enzyme catalyses L-homoserine + ATP = O-phospho-L-homoserine + ADP + H(+). It functions in the pathway amino-acid biosynthesis; L-threonine biosynthesis; L-threonine from L-aspartate: step 4/5. In terms of biological role, catalyzes the ATP-dependent phosphorylation of L-homoserine to L-homoserine phosphate. The protein is Homoserine kinase of Methanocella arvoryzae (strain DSM 22066 / NBRC 105507 / MRE50).